Reading from the N-terminus, the 930-residue chain is Isoleucine--tRNA ligase (930 aa).

Positions 57-67 match the 'HIGH' region motif; sequence PYANGNIHVGH. Glutamate 554 is a binding site for L-isoleucyl-5'-AMP. The 'KMSKS' region signature appears at 595–599; the sequence is KMSKS. Lysine 598 lines the ATP pocket. The Zn(2+) site is built by cysteine 888, cysteine 891, cysteine 908, and cysteine 911.

The protein belongs to the class-I aminoacyl-tRNA synthetase family. IleS type 1 subfamily. Monomer. Requires Zn(2+) as cofactor.

It localises to the cytoplasm. The enzyme catalyses tRNA(Ile) + L-isoleucine + ATP = L-isoleucyl-tRNA(Ile) + AMP + diphosphate. Its function is as follows. Catalyzes the attachment of isoleucine to tRNA(Ile). As IleRS can inadvertently accommodate and process structurally similar amino acids such as valine, to avoid such errors it has two additional distinct tRNA(Ile)-dependent editing activities. One activity is designated as 'pretransfer' editing and involves the hydrolysis of activated Val-AMP. The other activity is designated 'posttransfer' editing and involves deacylation of mischarged Val-tRNA(Ile). The polypeptide is Isoleucine--tRNA ligase (Streptococcus sanguinis (strain SK36)).